A 1242-amino-acid chain; its full sequence is von Willebrand factor A domain-containing protein 5B2 (1242 aa).

Residues 1–138 form the VIT domain; the sequence is MPGLYCPSSW…TMTVTLHSSR (138 aa). The VWFA domain occupies 354-527; sequence ELLFLLDSSS…KALEPALSDI (174 aa). Disordered regions lie at residues 569-650, 670-726, 751-794, 957-976, 987-1055, and 1118-1159; these read SRPP…SDTA, CSAS…CPLP, LAGR…GQGL, CSSE…SHLD, KGLQ…GSDH, and QGDS…GLGG. Positions 588–604 are enriched in low complexity; it reads PSPEEAPSAASPGTEPT. Polar residues predominate over residues 605–619; it reads GTSEPLGTGTVSAEL. The span at 681–700 shows a compositional bias: low complexity; the sequence is TGSSESPGSQGPGSPEGSAP. Residues 1125–1138 are compositionally biased toward low complexity; that stretch reads SCSPSPSSGSEGPG.

In Homo sapiens (Human), this protein is von Willebrand factor A domain-containing protein 5B2 (VWA5B2).